A 373-amino-acid polypeptide reads, in one-letter code: Flap endonuclease 1 (373 aa).

An N-domain region spans residues 1-105; it reads MGIKGLNALI…GELEKRLKRR (105 aa). Aspartate 34 contacts Mg(2+). The DNA site is built by arginine 47 and arginine 71. Residues aspartate 87, glutamate 159, glutamate 161, aspartate 180, and aspartate 182 each coordinate Mg(2+). The I-domain stretch occupies residues 123-254; it reads DIAKFERRTV…VTAFKLIKEH (132 aa). Glutamate 159 serves as a coordination point for DNA. Residues glycine 232 and aspartate 234 each contribute to the DNA site. Mg(2+) is bound at residue aspartate 234. Residues 340 to 348 form an interaction with PCNA region; that stretch reads TQGRLDKFF. The interval 347–373 is disordered; sequence FFVVKKRPAEEKKGKNTKEEKPKKKRK.

It belongs to the XPG/RAD2 endonuclease family. FEN1 subfamily. In terms of assembly, interacts with PCNA. Three molecules of FEN1 bind to one PCNA trimer with each molecule binding to one PCNA monomer. PCNA stimulates the nuclease activity without altering cleavage specificity. It depends on Mg(2+) as a cofactor. In terms of processing, phosphorylated. Phosphorylation upon DNA damage induces relocalization to the nuclear plasma.

It localises to the nucleus. The protein resides in the nucleolus. It is found in the nucleoplasm. Its subcellular location is the mitochondrion. In terms of biological role, structure-specific nuclease with 5'-flap endonuclease and 5'-3' exonuclease activities involved in DNA replication and repair. During DNA replication, cleaves the 5'-overhanging flap structure that is generated by displacement synthesis when DNA polymerase encounters the 5'-end of a downstream Okazaki fragment. It enters the flap from the 5'-end and then tracks to cleave the flap base, leaving a nick for ligation. Also involved in the long patch base excision repair (LP-BER) pathway, by cleaving within the apurinic/apyrimidinic (AP) site-terminated flap. Acts as a genome stabilization factor that prevents flaps from equilibrating into structures that lead to duplications and deletions. Also possesses 5'-3' exonuclease activity on nicked or gapped double-stranded DNA, and exhibits RNase H activity. Also involved in replication and repair of rDNA and in repairing mitochondrial DNA. The chain is Flap endonuclease 1 from Komagataella phaffii (strain GS115 / ATCC 20864) (Yeast).